Consider the following 102-residue polypeptide: uncharacterized protein (102 aa).

This is an uncharacterized protein from Saccharomyces cerevisiae (strain ATCC 204508 / S288c) (Baker's yeast).